A 218-amino-acid chain; its full sequence is uncharacterized protein (218 aa).

Belongs to the mimivirus L6/L7/L57 family.

This is an uncharacterized protein from Acanthamoeba polyphaga mimivirus (APMV).